Consider the following 105-residue polypeptide: Acylphosphatase (105 aa).

Positions 16 to 105 constitute an Acylphosphatase-like domain; that stretch reads RLTAWVRGRV…RGGYSGFTQA (90 aa). Catalysis depends on residues R31 and N49.

This sequence belongs to the acylphosphatase family.

The enzyme catalyses an acyl phosphate + H2O = a carboxylate + phosphate + H(+). This is Acylphosphatase (acyP) from Acidothermus cellulolyticus (strain ATCC 43068 / DSM 8971 / 11B).